Here is a 248-residue protein sequence, read N- to C-terminus: Probable succinyl-CoA:3-ketoacid coenzyme A transferase subunit A (248 aa).

24 to 30 (GGFGLCG) is a CoA binding site.

It belongs to the 3-oxoacid CoA-transferase subunit A family. Heterodimer of a subunit A and a subunit B.

It carries out the reaction a 3-oxo acid + succinyl-CoA = a 3-oxoacyl-CoA + succinate. The sequence is that of Probable succinyl-CoA:3-ketoacid coenzyme A transferase subunit A (scoA) from Mycobacterium bovis (strain ATCC BAA-935 / AF2122/97).